The sequence spans 167 residues: tRNA-specific adenosine deaminase (167 aa).

One can recognise a CMP/dCMP-type deaminase domain in the interval 6 to 117 (FSHEYWMRHA…DAKTGAAGSL (112 aa)). Histidine 57 contacts Zn(2+). Glutamate 59 functions as the Proton donor in the catalytic mechanism. Zn(2+) is bound by residues cysteine 87 and cysteine 90.

This sequence belongs to the cytidine and deoxycytidylate deaminase family. Homodimer. Zn(2+) is required as a cofactor.

It catalyses the reaction adenosine(34) in tRNA + H2O + H(+) = inosine(34) in tRNA + NH4(+). Catalyzes the deamination of adenosine to inosine at the wobble position 34 of tRNA(Arg2). The protein is tRNA-specific adenosine deaminase of Escherichia coli O157:H7.